Consider the following 307-residue polypeptide: Aspartate carbamoyltransferase catalytic subunit (307 aa).

2 residues coordinate carbamoyl phosphate: arginine 54 and threonine 55. Lysine 83 is an L-aspartate binding site. The carbamoyl phosphate site is built by arginine 104, histidine 132, and glutamine 135. Positions 165 and 228 each coordinate L-aspartate. 2 residues coordinate carbamoyl phosphate: leucine 267 and proline 268.

The protein belongs to the aspartate/ornithine carbamoyltransferase superfamily. ATCase family. In terms of assembly, heterododecamer (2C3:3R2) of six catalytic PyrB chains organized as two trimers (C3), and six regulatory PyrI chains organized as three dimers (R2).

The catalysed reaction is carbamoyl phosphate + L-aspartate = N-carbamoyl-L-aspartate + phosphate + H(+). Its pathway is pyrimidine metabolism; UMP biosynthesis via de novo pathway; (S)-dihydroorotate from bicarbonate: step 2/3. In terms of biological role, catalyzes the condensation of carbamoyl phosphate and aspartate to form carbamoyl aspartate and inorganic phosphate, the committed step in the de novo pyrimidine nucleotide biosynthesis pathway. The chain is Aspartate carbamoyltransferase catalytic subunit from Clostridium botulinum (strain Loch Maree / Type A3).